A 76-amino-acid chain; its full sequence is ATP synthase subunit 9, mitochondrial (76 aa).

At Met-1 the chain carries N-formylmethionine. 2 helical membrane passes run 14–34 (ISTI…AALI) and 52–72 (ILGF…SFLL).

This sequence belongs to the ATPase C chain family. As to quaternary structure, F-type ATPases have 2 components, CF(1) - the catalytic core - and CF(0) - the membrane proton channel. In yeast, the dimeric form of ATP synthase consists of 18 polypeptides: alpha, beta, gamma, delta, epsilon, 4 (B), 5 (OSCP), 6 (A), 8, 9 (C), d, E (Tim11), f, g, h, i, j and k.

Its subcellular location is the mitochondrion membrane. Functionally, mitochondrial membrane ATP synthase (F(1)F(0) ATP synthase or Complex V) produces ATP from ADP in the presence of a proton gradient across the membrane which is generated by electron transport complexes of the respiratory chain. F-type ATPases consist of two structural domains, F(1) - containing the extramembraneous catalytic core and F(0) - containing the membrane proton channel, linked together by a central stalk and a peripheral stalk. During catalysis, ATP synthesis in the catalytic domain of F(1) is coupled via a rotary mechanism of the central stalk subunits to proton translocation. Part of the complex F(0) domain. A homomeric c-ring of probably 10 subunits is part of the complex rotary element. This is ATP synthase subunit 9, mitochondrial (ATP9) from Saccharomyces paradoxus (Yeast).